The primary structure comprises 362 residues: Flotillin-like protein FloA 2 (362 aa).

The chain crosses the membrane as a helical span at residues Thr-24–Phe-44.

This sequence belongs to the flotillin-like FloA family. Homooligomerizes.

Its subcellular location is the cell membrane. It localises to the membrane raft. In terms of biological role, found in functional membrane microdomains (FMM) that may be equivalent to eukaryotic membrane rafts. FMMs are highly dynamic and increase in number as cells age. Flotillins are thought to be important factors in membrane fluidity. The polypeptide is Flotillin-like protein FloA 2 (Rhodopirellula baltica (strain DSM 10527 / NCIMB 13988 / SH1)).